We begin with the raw amino-acid sequence, 254 residues long: Dihydroorotate dehydrogenase B (NAD(+)), electron transfer subunit (254 aa).

Residues 1-99 (MLQTEMKVIQ…LGPLGKGFDL (99 aa)) form the FAD-binding FR-type domain. FAD is bound by residues 50 to 53 (RPIS), 67 to 69 (LYR), and 74 to 75 (GT). Cys-218, Cys-223, Cys-226, and Cys-241 together coordinate [2Fe-2S] cluster.

This sequence belongs to the PyrK family. Heterotetramer of 2 PyrK and 2 PyrD type B subunits. Requires [2Fe-2S] cluster as cofactor. The cofactor is FAD.

It participates in pyrimidine metabolism; UMP biosynthesis via de novo pathway; orotate from (S)-dihydroorotate (NAD(+) route): step 1/1. Its function is as follows. Responsible for channeling the electrons from the oxidation of dihydroorotate from the FMN redox center in the PyrD type B subunit to the ultimate electron acceptor NAD(+). This Listeria innocua serovar 6a (strain ATCC BAA-680 / CLIP 11262) protein is Dihydroorotate dehydrogenase B (NAD(+)), electron transfer subunit.